The following is a 468-amino-acid chain: Immunoglobulin superfamily member 21 (468 aa).

The signal sequence occupies residues 1-24 (MQAAPSLRRASCLLLAAILDLARG). Positions 25 to 132 (YLTVNIEPLP…RATREKVVLA (108 aa)) constitute an Ig-like 1 domain. Residues C46 and C116 are joined by a disulfide bond. 3 N-linked (GlcNAc...) asparagine glycosylation sites follow: N82, N165, and N407. The Ig-like 2 domain maps to 344-429 (PKIMMTPSRA…GSTDTHTRLI (86 aa)).

Interacts (Ig-like 1 domain) with NRXN2 (via Laminin G-like 1 domain) in a trans-interaction manner. Expressed in brain (at protein levels). Highly expressed in the pyramidal cell layer of the dorsal and ventral hippocampal CA1 and CA3 regions, layers 5 and 6 of the cortex, the thalamus and the pons and weakly expressed in the cerebellum. Expressed in neurons but not in glia.

The protein resides in the postsynaptic cell membrane. In terms of biological role, involved in synaptic inhibition in the brain. Selectively regulates inhibitory presynaptic differentiation through interacting with presynaptic NRXN2. The chain is Immunoglobulin superfamily member 21 (Igsf21) from Mus musculus (Mouse).